The primary structure comprises 41 residues: Urotensin-1 (41 aa).

Position 41 is a valine amide (Val41).

This sequence belongs to the sauvagine/corticotropin-releasing factor/urotensin I family.

It localises to the secreted. Its function is as follows. Urotensin is found in the teleost caudal neurosecretory system. It has a suggested role in osmoregulation and as a corticotropin-releasing factor. The sequence is that of Urotensin-1 from Catostomus commersonii (White sucker).